The sequence spans 244 residues: 1-(5-phosphoribosyl)-5-[(5-phosphoribosylamino)methylideneamino] imidazole-4-carboxamide isomerase (244 aa).

Asp-8 functions as the Proton acceptor in the catalytic mechanism. Asp-129 acts as the Proton donor in catalysis.

It belongs to the HisA/HisF family.

It is found in the cytoplasm. It catalyses the reaction 1-(5-phospho-beta-D-ribosyl)-5-[(5-phospho-beta-D-ribosylamino)methylideneamino]imidazole-4-carboxamide = 5-[(5-phospho-1-deoxy-D-ribulos-1-ylimino)methylamino]-1-(5-phospho-beta-D-ribosyl)imidazole-4-carboxamide. It functions in the pathway amino-acid biosynthesis; L-histidine biosynthesis; L-histidine from 5-phospho-alpha-D-ribose 1-diphosphate: step 4/9. The protein is 1-(5-phosphoribosyl)-5-[(5-phosphoribosylamino)methylideneamino] imidazole-4-carboxamide isomerase of Geobacter sulfurreducens (strain ATCC 51573 / DSM 12127 / PCA).